The primary structure comprises 570 residues: Sulfite reductase [NADPH] hemoprotein beta-component (570 aa).

[4Fe-4S] cluster-binding residues include cysteine 434, cysteine 440, cysteine 479, and cysteine 483. Cysteine 483 serves as a coordination point for siroheme.

This sequence belongs to the nitrite and sulfite reductase 4Fe-4S domain family. In terms of assembly, alpha(8)-beta(8). The alpha component is a flavoprotein, the beta component is a hemoprotein. Siroheme is required as a cofactor. [4Fe-4S] cluster serves as cofactor.

It catalyses the reaction hydrogen sulfide + 3 NADP(+) + 3 H2O = sulfite + 3 NADPH + 4 H(+). The protein operates within sulfur metabolism; hydrogen sulfide biosynthesis; hydrogen sulfide from sulfite (NADPH route): step 1/1. Functionally, component of the sulfite reductase complex that catalyzes the 6-electron reduction of sulfite to sulfide. This is one of several activities required for the biosynthesis of L-cysteine from sulfate. The chain is Sulfite reductase [NADPH] hemoprotein beta-component from Escherichia coli O6:H1 (strain CFT073 / ATCC 700928 / UPEC).